The following is a 608-amino-acid chain: Tyrosyl-DNA phosphodiesterase 1 (608 aa).

Residues 1-101 (MSQEGDYGRW…SDDELQPEMP (101 aa)) are disordered. Ser61 is subject to Phosphoserine. Residue Thr147 is modified to Phosphothreonine. Position 148 is a phosphoserine (Ser148). The active-site Nucleophile is the His263. Substrate is bound at residue Lys265. The interaction with DNA stretch occupies residues 400–403 (SVGS). The active-site Proton donor/acceptor is the His493. Lys495 provides a ligand contact to substrate.

Belongs to the tyrosyl-DNA phosphodiesterase family. As to quaternary structure, monomer. In terms of processing, phosphorylated on serine and/or threonine residues, but not on tyrosine residues. Ubiquitously expressed. Similar expression throughout the central nervous system (whole brain, amygdala, caudate nucleus, cerebellum, cerebral cortex, frontal lobe, hippocampus, medulla oblongata, occipital lobe, putamen, substantia nigra, temporal lobe, thalamus, nucleus accumbens and spinal cord) and increased expression in testis and thymus.

The protein localises to the nucleus. It localises to the cytoplasm. DNA repair enzyme that can remove a variety of covalent adducts from DNA through hydrolysis of a 3'-phosphodiester bond, giving rise to DNA with a free 3' phosphate. Catalyzes the hydrolysis of dead-end complexes between DNA and the topoisomerase I active site tyrosine residue. Hydrolyzes 3'-phosphoglycolates on protruding 3' ends on DNA double-strand breaks due to DNA damage by radiation and free radicals. Acts on blunt-ended double-strand DNA breaks and on single-stranded DNA. Has low 3'exonuclease activity and can remove a single nucleoside from the 3'end of DNA and RNA molecules with 3'hydroxyl groups. Has no exonuclease activity towards DNA or RNA with a 3'phosphate. The polypeptide is Tyrosyl-DNA phosphodiesterase 1 (TDP1) (Homo sapiens (Human)).